Reading from the N-terminus, the 298-residue chain is ADP/ATP translocase 1 (298 aa).

At 1 to 7 (MGDHAWS) the chain is on the mitochondrial intermembrane side. N-acetylglycine is present on G2. One copy of the Solcar 1 repeat lies at 6–98 (WSFLKDFLAG…FAFKDKYKQL (93 aa)). The residue at position 7 (S7) is a Phosphoserine. The helical transmembrane segment at 8-37 (FLKDFLAGGVAAAVSKTAVAPIERVKLLLQ) threads the bilayer. Topologically, residues 38 to 74 (VQHASKQISAEKQYKGIIDCVVRIPKEQGFLSFWRGN) are mitochondrial matrix. N6,N6,N6-trimethyllysine is present on K52. Residues 75–99 (LANVIRYFPTQALNFAFKDKYKQLF) traverse the membrane as a helical segment. Residues R80 and K92 each coordinate ADP. Over 100 to 109 (LGGVDRHKQF) the chain is Mitochondrial intermembrane. A helical transmembrane segment spans residues 110 to 130 (WRYFAGNLASGGAAGATSLCF). Solcar repeat units follow at residues 111–201 (RYFA…AKGM) and 212–297 (VSWM…IKKY). Residues 131–178 (VYPLDFARTRLAADVGKGAAQREFHGLGDCIIKIFKSDGLRGLYQGFN) are Mitochondrial matrix-facing. K147 carries the N6-succinyllysine modification. S-nitrosocysteine is present on C160. The helical transmembrane segment at 179–199 (VSVQGIIIYRAAYFGVYDTAK) threads the bilayer. Over 200-210 (GMLPDPKNVHI) the chain is Mitochondrial intermembrane. Residues 211-231 (FVSWMIAQSVTAVAGLVSYPF) form a helical membrane-spanning segment. At 232–273 (DTVRRRMMMQSGRKGADIMYTGTVDCWRKIAKDEGAKAFFKG) the chain is on the mitochondrial matrix side. R235 contributes to the ADP binding site. An important for transport activity region spans residues 235-240 (RRRMMM). Positions 235-240 (RRRMMM) match the Nucleotide carrier signature motif motif. An N6-succinyllysine mark is found at K245 and K272. The chain crosses the membrane as a helical span at residues 274-291 (AWSNVLRGMGGAFVLVLY). Over 292–298 (DEIKKYV) the chain is Mitochondrial intermembrane.

This sequence belongs to the mitochondrial carrier (TC 2.A.29) family. In terms of assembly, monomer. Found in a complex with ARL2, ARL2BP and SLC25A4/ANT1. Interacts with ARL2BP. Interacts with ARHGAP11B, thereby inhibiting the mitochondrial permeability transition pore (mPTP). Interacts with TIMM44; leading to inhibit the presequence translocase TIMM23, thereby promoting stabilization of PINK1. As to quaternary structure, (Microbial infection) Interacts with HIV-1 Vpr. Post-translationally, under cell death induction, transglutaminated by TGM2. Transglutamination leads to formation of covalent cross-links between a glutamine and the epsilon-amino group of a lysine residue, forming polymers. As to expression, expressed in erythrocytes (at protein level).

It is found in the mitochondrion inner membrane. The protein resides in the membrane. It catalyses the reaction ADP(in) + ATP(out) = ADP(out) + ATP(in). It carries out the reaction H(+)(in) = H(+)(out). Its activity is regulated as follows. The matrix-open state (m-state) is inhibited by the membrane-permeable bongkrekic acid (BKA). The cytoplasmic-open state (c-state) is inhibited by the membrane-impermeable toxic inhibitor carboxyatractyloside (CATR). Proton transporter activity is inhibited by ADP:ATP antiporter activity. ADP:ATP antiporter that mediates import of ADP into the mitochondrial matrix for ATP synthesis, and export of ATP out to fuel the cell. Cycles between the cytoplasmic-open state (c-state) and the matrix-open state (m-state): operates by the alternating access mechanism with a single substrate-binding site intermittently exposed to either the cytosolic (c-state) or matrix (m-state) side of the inner mitochondrial membrane. In addition to its ADP:ATP antiporter activity, also involved in mitochondrial uncoupling and mitochondrial permeability transition pore (mPTP) activity. Plays a role in mitochondrial uncoupling by acting as a proton transporter: proton transport uncouples the proton flows via the electron transport chain and ATP synthase to reduce the efficiency of ATP production and cause mitochondrial thermogenesis. Proton transporter activity is inhibited by ADP:ATP antiporter activity, suggesting that SLC25A4/ANT1 acts as a master regulator of mitochondrial energy output by maintaining a delicate balance between ATP production (ADP:ATP antiporter activity) and thermogenesis (proton transporter activity). Proton transporter activity requires free fatty acids as cofactor, but does not transport it. Also plays a key role in mPTP opening, a non-specific pore that enables free passage of the mitochondrial membranes to solutes of up to 1.5 kDa, and which contributes to cell death. It is however unclear if SLC25A4/ANT1 constitutes a pore-forming component of mPTP or regulates it. Acts as a regulator of mitophagy independently of ADP:ATP antiporter activity: promotes mitophagy via interaction with TIMM44, leading to inhibit the presequence translocase TIMM23, thereby promoting stabilization of PINK1. This chain is ADP/ATP translocase 1, found in Homo sapiens (Human).